Reading from the N-terminus, the 69-residue chain is Putative membrane protein insertion efficiency factor (69 aa).

The protein belongs to the UPF0161 family.

The protein resides in the cell membrane. Functionally, could be involved in insertion of integral membrane proteins into the membrane. This chain is Putative membrane protein insertion efficiency factor, found in Clostridium beijerinckii (strain ATCC 51743 / NCIMB 8052) (Clostridium acetobutylicum).